Reading from the N-terminus, the 443-residue chain is Probable ribonuclease FAU-1 (443 aa).

It belongs to the FAU-1 family.

Its function is as follows. Probable RNase involved in rRNA stability through maturation and/or degradation of precursor rRNAs. Binds to RNA in loop regions with AU-rich sequences. The polypeptide is Probable ribonuclease FAU-1 (Pyrobaculum aerophilum (strain ATCC 51768 / DSM 7523 / JCM 9630 / CIP 104966 / NBRC 100827 / IM2)).